A 324-amino-acid polypeptide reads, in one-letter code: Disintegrin-like/cysteine-rich protein MPIII-3 (324 aa).

An N-terminal signal peptide occupies residues 1–20 (MIQVLLVIICLAVFPYQVSS). Positions 21–173 (IILESGNINN…DEDPKKCEFR (153 aa)) are cleaved as a propeptide — or 174 (in a minor form). Residues 168 to 207 (KKCEFRRAGTECRPARSECDVAEYCTGQSAECPTDVFHSN) form the Disintegrin; truncated domain. Residues 179–192 (CRPARSECDVAEYC) form an inhibits platelet aggregation region. Disulfide bonds link Cys179–Cys199, Cys186–Cys218, Cys192–Cys199, Cys211–Cys223, Cys230–Cys280, Cys245–Cys287, Cys258–Cys268, Cys275–Cys312, and Cys306–Cys317. Residues 185–187 (ECD) carry the D/ECD-tripeptide motif. Ca(2+)-binding residues include Asp187 and Glu190. Positions 202 and 203 each coordinate Ca(2+). An N-linked (GlcNAc...) asparagine glycan is attached at Asn237.

The protein belongs to the venom metalloproteinase (M12B) family. P-III subfamily. P-IIIe sub-subfamily. In terms of assembly, monomer. Is able to form a homodimer. In terms of processing, N-glycosylated. Exists in at least six differently N-glycosylated forms. The glycans likely have a stabilizing purpose. Post-translationally, cys-199 forms a disulfide bond with Cys-192 in 90% and with Cys-179 in 10% of the protein molecules; alternative disulfide bonds may have a major effect on the conformation of the protein. In terms of tissue distribution, expressed by the venom gland (at protein level). Expressed by the venom gland.

Its subcellular location is the secreted. With respect to regulation, activity may be regulated by the intramolecular thiol-disulfide exchange or disulfide bond switching. Abolishes platelet aggregation induced by collagen, ADP (IC(50)=292 nM) and arachidonic-acid. The inhibition of collagen-induced platelet aggregation may be due to its ability to bind collagen and block the binding site on collagen for platelets and/or to its ability to bind to the platelet alpha-2/beta-1 collagen receptor (ITGA2/ITGB1) to block its interaction with collagen and hence prevent platelet stimulation. The inhibition of ADP- or arachidonic-acid-induced platelet aggregation may be due to it acting as an antagonist of the ADP receptors or thromboxane-prostanoid receptors of the platelets, respectively. Does not interact with integrins alpha-IIb (ITGA2B) or beta-3 (ITGB3) nor platelet glycoproteins VI (GP6) or IX (GP9) in vitro, however, the detection is dependent on experimental conditions and may happen in vivo. Able to bind to platelet glycoprotein Ib alpha chain (GP1BA) receptor in vitro, although this interaction may have pathologically only limited effect in vivo as it is not able to abolish the von Willebrand factor (vWF)-dependent platelet agglutination induced by ristocetin. Does not affect blood coagulation. This chain is Disintegrin-like/cysteine-rich protein MPIII-3, found in Vipera ammodytes ammodytes (Western sand viper).